Reading from the N-terminus, the 533-residue chain is Metallothionein expression activator (533 aa).

C2H2-type zinc fingers lie at residues 443-472 (YVCL…SDRP) and 473-500 (YRCD…NGRP). Residues 501 to 524 (YVCECLKRFNRLDALNRHKQRNIC) form a C2H2-type 3; atypical zinc finger.

It is found in the nucleus. Regulates the transcription of genes required for cell separation. This Schizosaccharomyces pombe (strain 972 / ATCC 24843) (Fission yeast) protein is Metallothionein expression activator (ace2).